We begin with the raw amino-acid sequence, 366 residues long: MISSLHRPTVARVDLEAIRANIDHIHQHIPKKVRTYAVVKANAYGHGAVAVSKAVEDQVDGYCVSNLDEALELRQAGIDKEILILGVILASELQLAIKHQLTITVASLEWLELAKKESVDFSQLHVHVKVDSGMGRIGVRSLAEANQLISILSDMGVQLDGIFTHFATADDSDHAMFDKQLTFFKQLVEQLDKRPALVHASNSATSLWHSETIFNAIRLGIVIYGLNPSGNSLSLPCPLKEALSLESRLVHVKQIQAGDSVGYGASYVAAEPEYVGTLPIGYADGWTRNMQGFKVLVEGEFCDIIGRVSMDQLTIRLPKAYPIGTKVTLIGQQGKQVITATDVADYRGTINYEVLCLLSDRIPREY.

The active-site Proton acceptor; specific for D-alanine is Lys-40. Residue Lys-40 is modified to N6-(pyridoxal phosphate)lysine. Substrate is bound at residue Arg-136. Tyr-263 serves as the catalytic Proton acceptor; specific for L-alanine. Substrate is bound at residue Met-310.

Belongs to the alanine racemase family. Requires pyridoxal 5'-phosphate as cofactor.

It catalyses the reaction L-alanine = D-alanine. Its pathway is amino-acid biosynthesis; D-alanine biosynthesis; D-alanine from L-alanine: step 1/1. Functionally, catalyzes the interconversion of L-alanine and D-alanine. May also act on other amino acids. The chain is Alanine racemase (alr) from Streptococcus equi subsp. equi (strain 4047).